A 227-amino-acid chain; its full sequence is NAD(P)H-quinone oxidoreductase subunit K, chloroplastic (227 aa).

Residues cysteine 43, cysteine 44, cysteine 108, and cysteine 139 each coordinate [4Fe-4S] cluster.

Belongs to the complex I 20 kDa subunit family. In terms of assembly, NDH is composed of at least 16 different subunits, 5 of which are encoded in the nucleus. It depends on [4Fe-4S] cluster as a cofactor.

Its subcellular location is the plastid. The protein resides in the chloroplast thylakoid membrane. It carries out the reaction a plastoquinone + NADH + (n+1) H(+)(in) = a plastoquinol + NAD(+) + n H(+)(out). The enzyme catalyses a plastoquinone + NADPH + (n+1) H(+)(in) = a plastoquinol + NADP(+) + n H(+)(out). NDH shuttles electrons from NAD(P)H:plastoquinone, via FMN and iron-sulfur (Fe-S) centers, to quinones in the photosynthetic chain and possibly in a chloroplast respiratory chain. The immediate electron acceptor for the enzyme in this species is believed to be plastoquinone. Couples the redox reaction to proton translocation, and thus conserves the redox energy in a proton gradient. The polypeptide is NAD(P)H-quinone oxidoreductase subunit K, chloroplastic (Pelargonium hortorum (Common geranium)).